The chain runs to 91 residues: Translation initiation factor IF-1 (91 aa).

The region spanning 1 to 72 (MAKEELLEFE…DRGRINFRHK (72 aa)) is the S1-like domain. Residues 70–91 (RHKAEGNAPPPGARRQQNFRRR) form a disordered region.

The protein belongs to the IF-1 family. In terms of assembly, component of the 30S ribosomal translation pre-initiation complex which assembles on the 30S ribosome in the order IF-2 and IF-3, IF-1 and N-formylmethionyl-tRNA(fMet); mRNA recruitment can occur at any time during PIC assembly.

The protein localises to the cytoplasm. Its function is as follows. One of the essential components for the initiation of protein synthesis. Stabilizes the binding of IF-2 and IF-3 on the 30S subunit to which N-formylmethionyl-tRNA(fMet) subsequently binds. Helps modulate mRNA selection, yielding the 30S pre-initiation complex (PIC). Upon addition of the 50S ribosomal subunit IF-1, IF-2 and IF-3 are released leaving the mature 70S translation initiation complex. The polypeptide is Translation initiation factor IF-1 (Azorhizobium caulinodans (strain ATCC 43989 / DSM 5975 / JCM 20966 / LMG 6465 / NBRC 14845 / NCIMB 13405 / ORS 571)).